The following is a 390-amino-acid chain: Succinyl-diaminopimelate desuccinylase (390 aa).

Histidine 74 provides a ligand contact to Zn(2+). The active site involves aspartate 76. Aspartate 107 contacts Zn(2+). Glutamate 140 (proton acceptor) is an active-site residue. 3 residues coordinate Zn(2+): glutamate 141, glutamate 169, and histidine 363.

Belongs to the peptidase M20A family. DapE subfamily. In terms of assembly, homodimer. Zn(2+) serves as cofactor. The cofactor is Co(2+).

The catalysed reaction is N-succinyl-(2S,6S)-2,6-diaminopimelate + H2O = (2S,6S)-2,6-diaminopimelate + succinate. It participates in amino-acid biosynthesis; L-lysine biosynthesis via DAP pathway; LL-2,6-diaminopimelate from (S)-tetrahydrodipicolinate (succinylase route): step 3/3. Its function is as follows. Catalyzes the hydrolysis of N-succinyl-L,L-diaminopimelic acid (SDAP), forming succinate and LL-2,6-diaminopimelate (DAP), an intermediate involved in the bacterial biosynthesis of lysine and meso-diaminopimelic acid, an essential component of bacterial cell walls. The protein is Succinyl-diaminopimelate desuccinylase of Bartonella bacilliformis (strain ATCC 35685 / KC583 / Herrer 020/F12,63).